The chain runs to 313 residues: MAGELPIATPLPTSPLAMEYLNDFDLMKFDVKKEPLGGRPDRAIRQCNRLQPTGSVSSTPISTPCSSVPSSPSFSPTEHKTHLDDLYWMSSSSYQHVSPEALNLTPEDAVEALIGQHQMPPQLQGYESFRAHHHHHHQNQHQYQGVHHEEMGLPHHHPHHHQHQHHQTSPSPSGSSSSSQQLHHQQQHSSSSAVEDRFSDDQLVSMTVRELNRHLRGFTKDDVIRLKQKRRTLKNRGYAQSCRYKRVQQKHNLEGEKTQLVQQVEQLKQEVSRLARERDAYKIKCEKLANNNSSNFREAGSTSDNPSSPEFFM.

Disordered regions lie at residues Q51 to T77 and M151 to R197. Over residues S55–P76 the composition is skewed to low complexity. Positions P154–H166 are enriched in basic residues. The segment covering Q167–S192 has biased composition (low complexity). Residues R225–K250 form a basic motif region. The 64-residue stretch at R225–L288 folds into the bZIP domain. The interval L253–L274 is leucine-zipper. The segment at N292 to M313 is disordered.

This sequence belongs to the bZIP family. Maf subfamily. In terms of assembly, homodimer or heterodimer with other bHLH-Zip transcription factors. Binds DNA as a homodimer or a heterodimer.

Its subcellular location is the nucleus. Acts as a transcriptional activator or repressor. Implicated in the regulation of cell-type specific gene expression and play a role in inductive events during lens development. The protein is Transcription factor MafB (mafb) of Xenopus laevis (African clawed frog).